A 78-amino-acid chain; its full sequence is Omega-conotoxin-like 12 (78 aa).

The first 22 residues, 1 to 22 (MKLTCVVIVAVLLLTACQLITA), serve as a signal peptide directing secretion. Residues 23–42 (DDSRGTQKHRSLRSTTKVSK) constitute a propeptide that is removed on maturation. Cystine bridges form between Cys-46-Cys-62, Cys-53-Cys-65, and Cys-61-Cys-72.

This sequence belongs to the conotoxin O1 superfamily. As to expression, expressed by the venom duct.

The protein localises to the secreted. Omega-conotoxins act at presynaptic membranes, they bind and block voltage-gated calcium channels (Cav). In Conus striatus (Striated cone), this protein is Omega-conotoxin-like 12.